The primary structure comprises 588 residues: Actin-histidine N-methyltransferase (588 aa).

The tract at residues 1–25 (MGKKSRVKTQKSGTGATASVSPKET) is disordered. A compositionally biased stretch (polar residues) spans 10-25 (QKSGTGATASVSPKET). S-adenosyl-L-methionine-binding positions include arginine 75, 104-106 (EGF), arginine 254, 275-279 (DMCNH), and 325-327 (SGF). In terms of domain architecture, SET spans 94–314 (EGFEMVNFKE…AGEQIYIFYG (221 aa)). The segment at 546–588 (VNGENSIPNGTRSGKENFNQEGSERATEGTKESSSDSTAGARE) is disordered. Polar residues predominate over residues 548 to 566 (GENSIPNGTRSGKENFNQE). A compositionally biased stretch (basic and acidic residues) spans 567 to 579 (GSERATEGTKESS).

Belongs to the class V-like SAM-binding methyltransferase superfamily. SETD3 actin-histidine methyltransferase family. Interacts with MYOD1. In terms of processing, phosphorylated by GSK3B, which is required for recognition by the SCF(FBXW7) complex and subsequent degradation. Post-translationally, ubiquitinated by the SCF(FBXW7) complex following phosphorylation by GSK3B, leading to its degradation by the proteasome.

It localises to the cytoplasm. The protein resides in the nucleus. It catalyses the reaction L-histidyl-[protein] + S-adenosyl-L-methionine = N(tele)-methyl-L-histidyl-[protein] + S-adenosyl-L-homocysteine + H(+). Its function is as follows. Protein-histidine N-methyltransferase that specifically mediates 3-methylhistidine (tele-methylhistidine) methylation of actin at 'His-73'. Histidine methylation of actin is required for smooth muscle contraction of the laboring uterus during delivery. Does not have protein-lysine N-methyltransferase activity and probably only catalyzes histidine methylation of actin. The chain is Actin-histidine N-methyltransferase from Canis lupus familiaris (Dog).